The sequence spans 112 residues: uncharacterized protein (112 aa).

The region spanning 5–112 is the HIT domain; it reads IFQKIIKGII…LLGGKKLNKI (108 aa). A Histidine triad motif motif is present at residues 98 to 102; it reads HLHLH.

This is an uncharacterized protein from Buchnera aphidicola subsp. Baizongia pistaciae (strain Bp).